The following is a 418-amino-acid chain: AP-3 complex subunit mu-1 (418 aa).

In terms of domain architecture, MHD spans 176-417 (NNEAYFDVVE…VTKAGKFQVR (242 aa)).

It belongs to the adaptor complexes medium subunit family. In terms of assembly, adaptor protein complex 3 (AP-3) is a heterotetramer composed of two large adaptins (delta-type subunit AP3D1 and beta-type subunit AP3B1 or AP3B2), a medium adaptin (mu-type subunit AP3M1 or AP3M2) and a small adaptin (sigma-type subunit APS1 or AP3S2). Interacts with AGAP1. AP-3 associates with the BLOC-1 complex.

The protein resides in the golgi apparatus. It localises to the cytoplasmic vesicle membrane. Its function is as follows. Part of the AP-3 complex, an adaptor-related complex which is not clathrin-associated. The complex is associated with the Golgi region as well as more peripheral structures. It facilitates the budding of vesicles from the Golgi membrane and may be directly involved in trafficking to lysosomes. In concert with the BLOC-1 complex, AP-3 is required to target cargos into vesicles assembled at cell bodies for delivery into neurites and nerve terminals. The polypeptide is AP-3 complex subunit mu-1 (Ap3m1) (Mus musculus (Mouse)).